The primary structure comprises 170 residues: Urease accessory protein UreE (170 aa).

It belongs to the UreE family.

Its subcellular location is the cytoplasm. In terms of biological role, involved in urease metallocenter assembly. Binds nickel. Probably functions as a nickel donor during metallocenter assembly. The chain is Urease accessory protein UreE from Helicobacter pylori (strain HPAG1).